The following is a 343-amino-acid chain: Cytoplasmic tRNA 2-thiolation protein 1 (343 aa).

It belongs to the TtcA family. CTU1/NCS6/ATPBD3 subfamily.

The protein resides in the cytoplasm. It functions in the pathway tRNA modification; 5-methoxycarbonylmethyl-2-thiouridine-tRNA biosynthesis. Plays a central role in 2-thiolation of mcm(5)S(2)U at tRNA wobble positions of tRNA(Lys), tRNA(Glu) and tRNA(Gln). Directly binds tRNAs and probably acts by catalyzing adenylation of tRNAs, an intermediate required for 2-thiolation. It is unclear whether it acts as a sulfurtransferase that transfers sulfur from thiocarboxylated URM1 onto the uridine of tRNAs at wobble position. The chain is Cytoplasmic tRNA 2-thiolation protein 1 from Drosophila mojavensis (Fruit fly).